The following is a 348-amino-acid chain: Sulfate/thiosulfate import ATP-binding protein CysA (348 aa).

Residues 3 to 237 (IRIQELCKQF…PSSPFVYSFV (235 aa)) enclose the ABC transporter domain. Residue 35-42 (GPSGSGKT) coordinates ATP.

The protein belongs to the ABC transporter superfamily. Sulfate/tungstate importer (TC 3.A.1.6) family. The complex is composed of two ATP-binding proteins (CysA), two transmembrane proteins (CysT and CysW) and a solute-binding protein (CysP).

It localises to the cell inner membrane. It catalyses the reaction sulfate(out) + ATP + H2O = sulfate(in) + ADP + phosphate + H(+). The catalysed reaction is thiosulfate(out) + ATP + H2O = thiosulfate(in) + ADP + phosphate + H(+). In terms of biological role, part of the ABC transporter complex CysAWTP involved in sulfate/thiosulfate import. Responsible for energy coupling to the transport system. The sequence is that of Sulfate/thiosulfate import ATP-binding protein CysA from Xylella fastidiosa (strain 9a5c).